The sequence spans 460 residues: Argininosuccinate lyase (460 aa).

It belongs to the lyase 1 family. Argininosuccinate lyase subfamily.

Its subcellular location is the cytoplasm. The enzyme catalyses 2-(N(omega)-L-arginino)succinate = fumarate + L-arginine. The protein operates within amino-acid biosynthesis; L-arginine biosynthesis; L-arginine from L-ornithine and carbamoyl phosphate: step 3/3. This chain is Argininosuccinate lyase, found in Nitratidesulfovibrio vulgaris (strain ATCC 29579 / DSM 644 / CCUG 34227 / NCIMB 8303 / VKM B-1760 / Hildenborough) (Desulfovibrio vulgaris).